The following is a 110-amino-acid chain: Small ribosomal subunit protein uS17 (110 aa).

Belongs to the universal ribosomal protein uS17 family. Part of the 30S ribosomal subunit.

One of the primary rRNA binding proteins, it binds specifically to the 5'-end of 16S ribosomal RNA. This chain is Small ribosomal subunit protein uS17, found in Haloquadratum walsbyi (strain DSM 16790 / HBSQ001).